Reading from the N-terminus, the 354-residue chain is MSKYWSNITKDIEPYVCGEQPKNKKIIKLNTNENPYPPSPKVLQAIENAAKDDLRLYPDPNCDTLRKTIANYYNLSKEEVFIGNGSDEVLSLSFLTFFNPEETVVFSDISYSFYPVYANLYKLDYELAKLREDFSIDIEDFKNTKGGAIITNPNAPTGLYLSLDSIKQILEDNINKVVMVDEAYIDFGGESSVSLIKDYPNLLVIQTLSKSRSLAGMRIGFALGKKELIEGLNRIKNSFNSYTIDRISSLAAIEAIKDEEYFKECTLKVIKTRNWTINELGKIGFKIIPSKANFIFITHDTYQAEDILIKLRDENVLVRYFNKDRISNYLRVSIGSKEEMEIFMDKIKKIINKL.

Lys-210 carries the N6-(pyridoxal phosphate)lysine modification.

This sequence belongs to the class-II pyridoxal-phosphate-dependent aminotransferase family. Histidinol-phosphate aminotransferase subfamily. Homodimer. Pyridoxal 5'-phosphate is required as a cofactor.

The catalysed reaction is L-histidinol phosphate + 2-oxoglutarate = 3-(imidazol-4-yl)-2-oxopropyl phosphate + L-glutamate. It participates in amino-acid biosynthesis; L-histidine biosynthesis; L-histidine from 5-phospho-alpha-D-ribose 1-diphosphate: step 7/9. The chain is Histidinol-phosphate aminotransferase from Clostridium botulinum (strain ATCC 19397 / Type A).